Here is a 194-residue protein sequence, read N- to C-terminus: Fe/S biogenesis protein NfuA (194 aa).

The [4Fe-4S] cluster site is built by Cys152 and Cys155.

Belongs to the NfuA family. In terms of assembly, homodimer. [4Fe-4S] cluster is required as a cofactor.

Functionally, involved in iron-sulfur cluster biogenesis. Binds a 4Fe-4S cluster, can transfer this cluster to apoproteins, and thereby intervenes in the maturation of Fe/S proteins. Could also act as a scaffold/chaperone for damaged Fe/S proteins. The sequence is that of Fe/S biogenesis protein NfuA from Pseudomonas fluorescens (strain Pf0-1).